Here is a 254-residue protein sequence, read N- to C-terminus: 30 kDa major early protein (254 aa).

In Human cytomegalovirus (strain Eisenhardt) (HHV-5), this protein is 30 kDa major early protein.